A 563-amino-acid chain; its full sequence is Arginine--tRNA ligase (563 aa).

The 'HIGH' region motif lies at 121 to 131; it reads PNIAKPMSMGH.

It belongs to the class-I aminoacyl-tRNA synthetase family. Monomer.

The protein localises to the cytoplasm. The catalysed reaction is tRNA(Arg) + L-arginine + ATP = L-arginyl-tRNA(Arg) + AMP + diphosphate. In Leuconostoc citreum (strain KM20), this protein is Arginine--tRNA ligase.